We begin with the raw amino-acid sequence, 454 residues long: tRNA-2-methylthio-N(6)-dimethylallyladenosine synthase (454 aa).

One can recognise an MTTase N-terminal domain in the interval 11-128; the sequence is KKLYIQTHGC…LPEMIETPRE (118 aa). Cysteine 20, cysteine 57, cysteine 91, cysteine 165, cysteine 169, and cysteine 172 together coordinate [4Fe-4S] cluster. Residues 151–382 enclose the Radical SAM core domain; sequence EADGATAFVS…QTRIIQQAQE (232 aa). In terms of domain architecture, TRAM spans 385-449; it reads RRMVGNTERV…PNSLRGVLLG (65 aa).

The protein belongs to the methylthiotransferase family. MiaB subfamily. In terms of assembly, monomer. It depends on [4Fe-4S] cluster as a cofactor.

It is found in the cytoplasm. The enzyme catalyses N(6)-dimethylallyladenosine(37) in tRNA + (sulfur carrier)-SH + AH2 + 2 S-adenosyl-L-methionine = 2-methylsulfanyl-N(6)-dimethylallyladenosine(37) in tRNA + (sulfur carrier)-H + 5'-deoxyadenosine + L-methionine + A + S-adenosyl-L-homocysteine + 2 H(+). Catalyzes the methylthiolation of N6-(dimethylallyl)adenosine (i(6)A), leading to the formation of 2-methylthio-N6-(dimethylallyl)adenosine (ms(2)i(6)A) at position 37 in tRNAs that read codons beginning with uridine. This Saccharophagus degradans (strain 2-40 / ATCC 43961 / DSM 17024) protein is tRNA-2-methylthio-N(6)-dimethylallyladenosine synthase.